The following is a 569-amino-acid chain: Isochorismate synthase 1, chloroplastic (569 aa).

Residues 1-45 (MASLQFSSQFLGSNTKTHSSIISISRSYSPTPFTRFSRKKYESCS) constitute a chloroplast transit peptide.

Belongs to the isochorismate synthase family. In terms of assembly, monomer. Mg(2+) is required as a cofactor. Leaves.

The protein resides in the plastid. It localises to the chloroplast. The enzyme catalyses chorismate = isochorismate. Its pathway is siderophore biosynthesis; salicylate biosynthesis. Functionally, isochorismate synthase involved in the synthesis of salicylic acid (SA) required for both local and systemic acquired resistance (LAR and SAR) while SA synthesized through the phenylalanine ammonium lyase (PAL) pathway seems to potentiate plant cell death. Also involved in phylloquinone (vitamin K1) synthesis. Has no isochorismate pyruvate lyase (IPL) activity. The protein is Isochorismate synthase 1, chloroplastic (ICS1) of Arabidopsis thaliana (Mouse-ear cress).